The following is a 276-amino-acid chain: Shikimate dehydrogenase (NADP(+)) (276 aa).

Shikimate is bound by residues 15–17 (SKS) and Thr-62. The active-site Proton acceptor is Lys-66. Glu-78 is a binding site for NADP(+). Shikimate contacts are provided by Asn-87 and Asp-103. NADP(+)-binding positions include 127 to 131 (GAGGV), 150 to 155 (NRTHIK), and Met-214. Tyr-216 is a shikimate binding site. Gly-239 contributes to the NADP(+) binding site.

This sequence belongs to the shikimate dehydrogenase family. In terms of assembly, homodimer.

It carries out the reaction shikimate + NADP(+) = 3-dehydroshikimate + NADPH + H(+). Its pathway is metabolic intermediate biosynthesis; chorismate biosynthesis; chorismate from D-erythrose 4-phosphate and phosphoenolpyruvate: step 4/7. Functionally, involved in the biosynthesis of the chorismate, which leads to the biosynthesis of aromatic amino acids. Catalyzes the reversible NADPH linked reduction of 3-dehydroshikimate (DHSA) to yield shikimate (SA). The sequence is that of Shikimate dehydrogenase (NADP(+)) from Haemophilus ducreyi (strain 35000HP / ATCC 700724).